A 144-amino-acid chain; its full sequence is Large ribosomal subunit protein uL16 (144 aa).

Residues 1–14 (MLTPKRVKHRKQHR) show a composition bias toward basic residues. Residues 1-22 (MLTPKRVKHRKQHRPSLAGKAN) are disordered.

The protein belongs to the universal ribosomal protein uL16 family. In terms of assembly, part of the 50S ribosomal subunit.

Binds 23S rRNA and is also seen to make contacts with the A and possibly P site tRNAs. The protein is Large ribosomal subunit protein uL16 of Syntrophomonas wolfei subsp. wolfei (strain DSM 2245B / Goettingen).